The sequence spans 64 residues: Fatty acid-binding protein (64 aa).

The protein belongs to the calycin superfamily. Fatty-acid binding protein (FABP) family.

It localises to the cytoplasm. Its function is as follows. FABPs are thought to play a role in the intracellular transport of long-chain fatty acids and their acyl-CoA esters. This Acarus siro (Flour mite) protein is Fatty acid-binding protein.